Consider the following 412-residue polypeptide: Carboxypeptidase B1 (412 aa).

The first 18 residues, 1–18 (MIPRIVVVLLSVLAVVTA), serve as a signal peptide directing secretion. A propeptide spans 19–75 (RRSYEGYKVYGIVPESPDEAEILYQIRQSNPDLDFWHLTKQPGDEARVLVAPKDQRS) (activation peptide). A Peptidase M14 domain is found at 118 to 408 (SYLRHNEINE…VGIKAMALKV (291 aa)). The Zn(2+) site is built by His175 and Glu178. 175-178 (HARE) contributes to the a peptide binding site. N-linked (GlcNAc...) asparagine glycosylation occurs at Asn205. A peptide contacts are provided by residues Arg230 and 246 to 247 (NR). Cys240 and Cys263 form a disulfide bridge. His299 serves as a coordination point for Zn(2+). Residues 300–301 (SY) and Tyr351 contribute to the a peptide site. Glu374 serves as the catalytic Proton donor/acceptor. Residue Asn395 is glycosylated (N-linked (GlcNAc...) asparagine).

It belongs to the peptidase M14 family. As to quaternary structure, monomer. Interacts with Dengue virus type 2 (DENV2, MY89-88549 strain) envelope protein E. Interacts with Dengue virus envelope protein E type 3, type 2, type 4 and type 1 with decreasing strength. It depends on Zn(2+) as a cofactor. In terms of tissue distribution, expressed in midgut (at protein level).

The protein resides in the endoplasmic reticulum. The enzyme catalyses Preferential release of a C-terminal lysine or arginine amino acid.. Inhibited by S.tuberosum metallocarboxypeptidase inhibitor. Functionally, carboxypeptidase that preferentially hydrolyzes arginine and lysine residues at the C-terminus. During infection by dengue virus, may play a role in preventing viral packaging, maturation, and release from the midgut. The polypeptide is Carboxypeptidase B1 (Aedes aegypti (Yellowfever mosquito)).